Reading from the N-terminus, the 795-residue chain is Toll-like receptor 6 (795 aa).

A signal peptide spans 1 to 27 (MSQDRKPIVGSFHFVCALALIVGSMTP). At 28–584 (FSNELESMVD…FHMSPLSCDT (557 aa)) the chain is on the extracellular side. N-linked (GlcNAc...) asparagine glycosylation occurs at asparagine 42. LRR repeat units follow at residues 54–77 (TKALSLSQNSISELRMPDISFLSE), 78–101 (LRVLRLSHNRIRSLDFHVFLFNQD), 102–125 (LEYLDVSHNRLQNISCCPMASLRH), 126–150 (LDLSFNDFDVLPVCKEFGNLTKLTF), 151–175 (LGLSAAKFRQLDLLPVAHLHLSCIL), 176–199 (LDLVSYHIKGGETESLQIPNTTVL), 200–223 (HLVFHPNSLFSVQVNMSVNALGHL), 224–250 (QLSNIKLNDENCQRLMTFLSELTRGPT), 251–278 (LLNVTLQHIETTWKCSVKLFQFFWPRPV), 279–308 (EYLNIYNLTITERIDREEFTYSETALKSLM), 309–337 (IEHVKNQVFLFSKEALYSVFAEMNIKMLS), 338–361 (ISDTPFIHMVCPPSPSSFTFLNFT), 362–388 (QNVFTDSVFQGCSTLKRLQTLILQRNG), 389–414 (LKNFFKVALMTKNMSSLETLDVSLNS), 415–437 (LNSHAYDRTCAWAESILVLNLSS), 438–457 (NMLTGSVFRCLPPKVKVLDL), 458–478 (HNNRIMSIPKDVTHLQALQEL), 479–500 (NVASNSLTDLPGCGAFSSLSVL), and 501–524 (VIDHNSVSHPSEDFFQSCQNIRSL). A glycan (N-linked (GlcNAc...) asparagine) is linked at asparagine 114. A disulfide bridge links cysteine 117 with cysteine 139. N-linked (GlcNAc...) asparagine glycosylation is present at asparagine 144. Residues asparagine 195 and asparagine 214 are each glycosylated (N-linked (GlcNAc...) asparagine). An intrachain disulfide couples cysteine 235 to cysteine 265. Asparagine 253 and asparagine 285 each carry an N-linked (GlcNAc...) asparagine glycan. The cysteines at positions 348 and 373 are disulfide-linked. Asparagine 359 carries N-linked (GlcNAc...) asparagine glycosylation. Asparagine 401 and asparagine 434 each carry an N-linked (GlcNAc...) asparagine glycan. A disulfide bridge links cysteine 424 with cysteine 447. In terms of domain architecture, LRRCT spans 525-576 (TAGNNPFQCTCELRDFVKNIGWVAREVVEGWPDSYRCDYPESSKGTALRDFH). Residues 585–605 (VLLTVTIGATMLVLAVTGAFL) form a helical membrane-spanning segment. The Cytoplasmic portion of the chain corresponds to 606-795 (CLYFDLPWYV…ALVNEDDVKT (190 aa)). The TIR domain occupies 640–781 (LQFHAFVSYS…LFWANLRASF (142 aa)).

It belongs to the Toll-like receptor family. As to quaternary structure, homodimer (via cytoplasmic TIR domain). Heterodimer with TLR2 via their respective extracellular domains. Binds MYD88 via their respective TIR domains. Interacts with CD36, following CD36 stimulation by oxLDL or amyloid-beta 42, and forms a heterodimer with TLR4. The trimeric complex is internalized and triggers inflammatory response. LYN kinase activity facilitates TLR4:TLR6 heterodimerization and signal initiation. The heterodimer TLR2:TLR6 interacts with CD14 and CD36 in response to triacylated lipopeptides. Detected in thymus, spleen, ovary and lung. Expressed in macrohpages.

It localises to the cell membrane. The protein localises to the cytoplasmic vesicle. It is found in the phagosome membrane. Its subcellular location is the membrane raft. The protein resides in the golgi apparatus. Its function is as follows. Participates in the innate immune response to Gram-positive bacteria and fungi. Specifically recognizes diacylated and, to a lesser extent, triacylated lipopeptides. In response to diacylated lipopeptides, forms the activation cluster TLR2:TLR6:CD14:CD36, this cluster triggers signaling from the cell surface and subsequently is targeted to the Golgi in a lipid-raft dependent pathway. Acts via MYD88 and TRAF6, leading to NF-kappa-B activation, cytokine secretion and the inflammatory response. Recognizes mycoplasmal macrophage-activating lipopeptide-2kD (MALP-2), soluble tuberculosis factor (STF), phenol-soluble modulin (PSM) and B.burgdorferi outer surface protein A lipoprotein (OspA-L) cooperatively with TLR2. In complex with TLR4, promotes sterile inflammation in monocytes/macrophages in response to oxidized low-density lipoprotein (oxLDL) or amyloid-beta 42. In this context, the initial signal is provided by oxLDL- or amyloid-beta 42-binding to CD36. This event induces the formation of a heterodimer of TLR4 and TLR6, which is rapidly internalized and triggers inflammatory response, leading to the NF-kappa-B-dependent production of CXCL1, CXCL2 and CCL9 cytokines, via MYD88 signaling pathway, and CCL5 cytokine, via TICAM1 signaling pathway, as well as IL1B secretion. The polypeptide is Toll-like receptor 6 (Tlr6) (Mus musculus (Mouse)).